A 102-amino-acid chain; its full sequence is MVYAVVRAGGRQEKVEVGTIVTMDRVKDGENGTIELAAVLLVDGDKITSDAKSLSKVTVTATVLEDLRGPKIVIQKFKNKTGYKKRQGHRQELTRVKIIGIK.

This sequence belongs to the bacterial ribosomal protein bL21 family. In terms of assembly, part of the 50S ribosomal subunit. Contacts protein L20.

This protein binds to 23S rRNA in the presence of protein L20. The protein is Large ribosomal subunit protein bL21 of Leifsonia xyli subsp. xyli (strain CTCB07).